A 269-amino-acid chain; its full sequence is Shikimate dehydrogenase (NADP(+)) (269 aa).

Residues 14–16 (SKS) and threonine 61 contribute to the shikimate site. Lysine 65 (proton acceptor) is an active-site residue. Glutamate 77 lines the NADP(+) pocket. Shikimate-binding residues include asparagine 86 and aspartate 102. NADP(+) contacts are provided by residues 126–130 (GAGGA), 150–155 (NRTYEK), and methionine 213. Tyrosine 215 is a shikimate binding site. Residue glycine 237 coordinates NADP(+).

It belongs to the shikimate dehydrogenase family. As to quaternary structure, homodimer.

The enzyme catalyses shikimate + NADP(+) = 3-dehydroshikimate + NADPH + H(+). The protein operates within metabolic intermediate biosynthesis; chorismate biosynthesis; chorismate from D-erythrose 4-phosphate and phosphoenolpyruvate: step 4/7. In terms of biological role, involved in the biosynthesis of the chorismate, which leads to the biosynthesis of aromatic amino acids. Catalyzes the reversible NADPH linked reduction of 3-dehydroshikimate (DHSA) to yield shikimate (SA). The sequence is that of Shikimate dehydrogenase (NADP(+)) from Aliivibrio fischeri (strain ATCC 700601 / ES114) (Vibrio fischeri).